A 513-amino-acid chain; its full sequence is Noroxomaritidine synthase 2 (513 aa).

The chain crosses the membrane as a helical span at residues 14–34 (HYPEILIAIACFLIFSLLLSA). C458 contacts heme.

It belongs to the cytochrome P450 family. Heme serves as cofactor.

Its subcellular location is the membrane. It catalyses the reaction 4'-O-methylnorbelladine + reduced [NADPH--hemoprotein reductase] + O2 = (10bR,4aS)-noroxomaritidine + oxidized [NADPH--hemoprotein reductase] + 2 H2O + H(+). It carries out the reaction 4'-O-methylnorbelladine + reduced [NADPH--hemoprotein reductase] + O2 = (10bS,4aR)-noroxomaritidine + oxidized [NADPH--hemoprotein reductase] + 2 H2O + H(+). Its pathway is alkaloid biosynthesis. Its function is as follows. Cytochrome P450 that catalyzes an intramolecular para-para' C-C phenol coupling of 4'-O-methylnorbelladine in alkaloids biosynthesis, including haemanthamine- and crinamine-type alkaloids, promising anticancer agents. Catalyzes the formation of (10bR,4aS)-noroxomaritidine and (10bS,4aR)-noroxomaritidine from 4'-O-methylnorbelladine. This Narcissus aff. pseudonarcissus MK-2014 (Daffodil) protein is Noroxomaritidine synthase 2.